The sequence spans 509 residues: Ribonuclease Y (509 aa).

Residues 1-21 (MIILVAVVTAVISFGLGYVVA) form a helical membrane-spanning segment. One can recognise a KH domain in the interval 199-259 (TVSTVSLPSD…IRREIARLTL (61 aa)). Residues 325-418 (VLDHSIEVAQ…VAAADALSAA (94 aa)) enclose the HD domain.

Belongs to the RNase Y family.

It is found in the cell membrane. Endoribonuclease that initiates mRNA decay. The polypeptide is Ribonuclease Y (Pseudothermotoga lettingae (strain ATCC BAA-301 / DSM 14385 / NBRC 107922 / TMO) (Thermotoga lettingae)).